We begin with the raw amino-acid sequence, 203 residues long: Probable metallo-hydrolase MJ0296 (203 aa).

Zn(2+) is bound by residues His86, His88, Asp90, His91, His135, Asp152, and His193.

It belongs to the metallo-beta-lactamase superfamily. It depends on Zn(2+) as a cofactor.

The sequence is that of Probable metallo-hydrolase MJ0296 from Methanocaldococcus jannaschii (strain ATCC 43067 / DSM 2661 / JAL-1 / JCM 10045 / NBRC 100440) (Methanococcus jannaschii).